A 389-amino-acid polypeptide reads, in one-letter code: Probable inactive purple acid phosphatase 29 (389 aa).

A signal peptide spans 1-34 (MADNRRRRSLFDFLLFSVFLGLACLCLSPIPATA). Residue N80 is glycosylated (N-linked (GlcNAc...) asparagine). N136 is a substrate binding site. N136 lines the Zn(2+) pocket. 2 N-linked (GlcNAc...) asparagine glycosylation sites follow: N191 and N267. A Zn(2+)-binding site is contributed by H303. 303 to 305 (HDH) serves as a coordination point for substrate. Residue H305 coordinates Fe cation. The N-linked (GlcNAc...) asparagine glycan is linked to N380.

This sequence belongs to the metallophosphoesterase superfamily. Purple acid phosphatase family. Homodimer. The cofactor is Fe cation. Zn(2+) is required as a cofactor. Expressed in roots, stems, leaves, flowers and siliques.

Its subcellular location is the secreted. This is Probable inactive purple acid phosphatase 29 (PAP29) from Arabidopsis thaliana (Mouse-ear cress).